The chain runs to 138 residues: High mobility group B protein 4 (138 aa).

Disordered regions lie at residues Met-1 to Ala-41 and Leu-105 to Asp-138. Positions Lys-18–Lys-29 are enriched in basic residues. Positions Pro-35–Asn-104 form a DNA-binding region, HMG box. 2 positions are modified to phosphoserine: Ser-123 and Ser-130. Acidic residues predominate over residues Asp-126 to Asp-138.

Belongs to the HMGB family. In terms of tissue distribution, mostly expressed roots and flowers, and, to a lower extent, in stems and leaves.

The protein localises to the nucleus. It localises to the cytoplasm. Its subcellular location is the cytosol. Functionally, binds preferentially double-stranded DNA. The chain is High mobility group B protein 4 (HMGB4) from Arabidopsis thaliana (Mouse-ear cress).